An 813-amino-acid polypeptide reads, in one-letter code: DNA ligase (813 aa).

NAD(+) contacts are provided by residues 41–45 (DAEYD), 90–91 (SI), and Glu-127. The active-site N6-AMP-lysine intermediate is the Lys-129. NAD(+) contacts are provided by Arg-150, Glu-189, Lys-307, and Lys-331. 4 residues coordinate Zn(2+): Cys-440, Cys-443, Cys-458, and Cys-464. The 85-residue stretch at 729-813 (AEEGALSGKT…LLQNPPGDSA (85 aa)) folds into the BRCT domain.

The protein belongs to the NAD-dependent DNA ligase family. LigA subfamily. Mg(2+) is required as a cofactor. Requires Mn(2+) as cofactor.

The catalysed reaction is NAD(+) + (deoxyribonucleotide)n-3'-hydroxyl + 5'-phospho-(deoxyribonucleotide)m = (deoxyribonucleotide)n+m + AMP + beta-nicotinamide D-nucleotide.. Its function is as follows. DNA ligase that catalyzes the formation of phosphodiester linkages between 5'-phosphoryl and 3'-hydroxyl groups in double-stranded DNA using NAD as a coenzyme and as the energy source for the reaction. It is essential for DNA replication and repair of damaged DNA. The chain is DNA ligase from Ralstonia nicotianae (strain ATCC BAA-1114 / GMI1000) (Ralstonia solanacearum).